The sequence spans 513 residues: t-SNARE domain-containing protein 1 (513 aa).

Disordered stretches follow at residues 1-23 (MSYGSIARGGGLGSRGPFGGPSR) and 49-128 (ESKL…KPNF). Gly residues predominate over residues 7-19 (ARGGGLGSRGPFG). S378 carries the post-translational modification Phosphoserine. Residues 416-478 (LEAIRLREEA…EAARQLLAGA (63 aa)) form the t-SNARE coiled-coil homology domain. The helical transmembrane segment at 491-511 (CFLSAGVTALLVIIIIIATSV) threads the bilayer.

It localises to the membrane. The chain is t-SNARE domain-containing protein 1 (TSNARE1) from Homo sapiens (Human).